A 346-amino-acid chain; its full sequence is Flap endonuclease 1 (346 aa).

Positions 1–102 are N-domain; it reads MGVTELGKLI…AEIEERRKVK (102 aa). Mg(2+) is bound by residues aspartate 31, aspartate 84, glutamate 156, glutamate 158, aspartate 177, aspartate 179, and aspartate 239. The segment at 120–261 is I-domain; the sequence is DVAKYMKRAV…KALKLVWEFG (142 aa).

It belongs to the XPG/RAD2 endonuclease family. FEN1 subfamily. Interacts with PCNA. PCNA stimulates the nuclease activity without altering cleavage specificity. Requires Mg(2+) as cofactor.

Its function is as follows. Structure-specific nuclease with 5'-flap endonuclease and 5'-3' exonuclease activities involved in DNA replication and repair. During DNA replication, cleaves the 5'-overhanging flap structure that is generated by displacement synthesis when DNA polymerase encounters the 5'-end of a downstream Okazaki fragment. Binds the unpaired 3'-DNA end and kinks the DNA to facilitate 5' cleavage specificity. Cleaves one nucleotide into the double-stranded DNA from the junction in flap DNA, leaving a nick for ligation. Also involved in the base excision repair (BER) pathway. Acts as a genome stabilization factor that prevents flaps from equilibrating into structures that lead to duplications and deletions. Also possesses 5'-3' exonuclease activity on nicked or gapped double-stranded DNA. The polypeptide is Flap endonuclease 1 (Pyrobaculum islandicum (strain DSM 4184 / JCM 9189 / GEO3)).